Here is a 365-residue protein sequence, read N- to C-terminus: DNA replication and repair protein RecF (365 aa).

30 to 37 (GLNAQGKT) serves as a coordination point for ATP.

The protein belongs to the RecF family.

Its subcellular location is the cytoplasm. In terms of biological role, the RecF protein is involved in DNA metabolism; it is required for DNA replication and normal SOS inducibility. RecF binds preferentially to single-stranded, linear DNA. It also seems to bind ATP. The protein is DNA replication and repair protein RecF of Chlamydia trachomatis serovar A (strain ATCC VR-571B / DSM 19440 / HAR-13).